Consider the following 217-residue polypeptide: Adenylate kinase (217 aa).

10–15 (GAGKGT) is a binding site for ATP. Residues 30-59 (STGDMLRAAVKAESELGLQVKEVMASGGLV) are NMP. Residues T31, R36, 57-59 (GLV), 85-88 (GFPR), and Q92 each bind AMP. The interval 122–159 (GRRVHEGSGRIYHVKYDPPKVEGKDDETGEALIQREDD) is LID. Residues R123 and 132 to 133 (IY) each bind ATP. Residues R156 and R167 each contribute to the AMP site. ATP is bound at residue G203.

The protein belongs to the adenylate kinase family. Monomer.

Its subcellular location is the cytoplasm. It carries out the reaction AMP + ATP = 2 ADP. Its pathway is purine metabolism; AMP biosynthesis via salvage pathway; AMP from ADP: step 1/1. Functionally, catalyzes the reversible transfer of the terminal phosphate group between ATP and AMP. Plays an important role in cellular energy homeostasis and in adenine nucleotide metabolism. This chain is Adenylate kinase, found in Marinobacter nauticus (strain ATCC 700491 / DSM 11845 / VT8) (Marinobacter aquaeolei).